The following is an 842-amino-acid chain: Protein P (842 aa).

Residues 1–177 form a terminal protein domain (TP) region; sequence MPLSYQHFRK…FCGSPYSWEQ (177 aa). Positions 178–346 are spacer; sequence ELQHGRLVFQ…YCLTHIVNLL (169 aa). Residues 218–274 are disordered; it reads LKQSRLGLQPQQGSLARGKSGRSGSIRARVPPTTRRSFGVEPSGSGHIDNRASSTSS. Positions 347 to 690 are polymerase/reverse transcriptase domain (RT); the sequence is EDWGPCTEHG…YLHLYPVARR (344 aa). In terms of domain architecture, Reverse transcriptase spans 357–600; it reads EHNIRIPRTP…YSLNFMGYVI (244 aa). Mg(2+)-binding residues include D429, D551, and D552.

The protein belongs to the hepadnaviridae P protein family.

It catalyses the reaction DNA(n) + a 2'-deoxyribonucleoside 5'-triphosphate = DNA(n+1) + diphosphate. The catalysed reaction is Endonucleolytic cleavage to 5'-phosphomonoester.. With respect to regulation, activated by host HSP70 and HSP40 in vitro to be able to bind the epsilon loop of the pgRNA. Because deletion of the RNase H region renders the protein partly chaperone-independent, the chaperones may be needed indirectly to relieve occlusion of the RNA-binding site by this domain. Inhibited by several reverse-transcriptase inhibitors: Lamivudine, Adefovir and Entecavir. Its function is as follows. Multifunctional enzyme that converts the viral RNA genome into dsDNA in viral cytoplasmic capsids. This enzyme displays a DNA polymerase activity that can copy either DNA or RNA templates, and a ribonuclease H (RNase H) activity that cleaves the RNA strand of RNA-DNA heteroduplexes in a partially processive 3'- to 5'-endonucleasic mode. Neo-synthesized pregenomic RNA (pgRNA) are encapsidated together with the P protein, and reverse-transcribed inside the nucleocapsid. Initiation of reverse-transcription occurs first by binding the epsilon loop on the pgRNA genome, and is initiated by protein priming, thereby the 5'-end of (-)DNA is covalently linked to P protein. Partial (+)DNA is synthesized from the (-)DNA template and generates the relaxed circular DNA (RC-DNA) genome. After budding and infection, the RC-DNA migrates in the nucleus, and is converted into a plasmid-like covalently closed circular DNA (cccDNA). The activity of P protein does not seem to be necessary for cccDNA generation, and is presumably released from (+)DNA by host nuclear DNA repair machinery. The chain is Protein P from Hepatitis B virus genotype C subtype adr (isolate Korea/Kim/1989) (HBV-C).